The sequence spans 118 residues: Large ribosomal subunit protein bL19 (118 aa).

Belongs to the bacterial ribosomal protein bL19 family.

Functionally, this protein is located at the 30S-50S ribosomal subunit interface and may play a role in the structure and function of the aminoacyl-tRNA binding site. The polypeptide is Large ribosomal subunit protein bL19 (Helicobacter pylori (strain G27)).